The following is a 356-amino-acid chain: Glutamate 5-kinase (356 aa).

Lysine 6 is a binding site for ATP. Substrate contacts are provided by serine 46, aspartate 135, and asparagine 147. An ATP-binding site is contributed by 202–208 (TGGMRSK). The 78-residue stretch at 265–342 (KGIIVVDRGA…SEVRKLLNTT (78 aa)) folds into the PUA domain.

This sequence belongs to the glutamate 5-kinase family.

Its subcellular location is the cytoplasm. The catalysed reaction is L-glutamate + ATP = L-glutamyl 5-phosphate + ADP. It functions in the pathway amino-acid biosynthesis; L-proline biosynthesis; L-glutamate 5-semialdehyde from L-glutamate: step 1/2. Functionally, catalyzes the transfer of a phosphate group to glutamate to form L-glutamate 5-phosphate. The sequence is that of Glutamate 5-kinase from Aquifex aeolicus (strain VF5).